Reading from the N-terminus, the 423-residue chain is Core protease OPG082 (423 aa).

Residues His241, Asp248, and Cys328 contribute to the active site.

Belongs to the peptidase C57 family.

Its subcellular location is the virion. Its function is as follows. Late protein responsible for processing most or all of the viral core and membrane proteins known to undergo morphogenesis-associated proteolysis. These proteolytic events are involved in the transformation of immature virions (IV) into mature virions (MV). Probably cleaves at least the OPG129, OPG136, OPG098, and OPG144 precursors preferentially at Ala-Gly-|-Ala motifs. Also seems to process Ala-Gly-|-Ser and Ala-Gly-|-Thr motifs. In Homo sapiens (Human), this protein is Core protease OPG082 (OPG083).